The following is a 232-amino-acid chain: Thiamine import ATP-binding protein ThiQ (232 aa).

The 229-residue stretch at 2–230 (LKLTDITWLY…KASASALLGI (229 aa)) folds into the ABC transporter domain. Residue 32-39 (GPSGAGKS) coordinates ATP.

Belongs to the ABC transporter superfamily. Thiamine importer (TC 3.A.1.19.1) family. As to quaternary structure, the complex is composed of two ATP-binding proteins (ThiQ), two transmembrane proteins (ThiP) and a solute-binding protein (ThiB).

Its subcellular location is the cell inner membrane. The enzyme catalyses thiamine(out) + ATP + H2O = thiamine(in) + ADP + phosphate + H(+). Its function is as follows. Part of the ABC transporter complex ThiBPQ involved in thiamine import. Responsible for energy coupling to the transport system. This Shigella sonnei (strain Ss046) protein is Thiamine import ATP-binding protein ThiQ.